A 411-amino-acid chain; its full sequence is Phosphoglycerate kinase (411 aa).

Substrate contacts are provided by residues 28–30, R45, 68–71, R125, and R165; these read DIN and HQSR. Residues E338 and 364–367 contribute to the ATP site; that span reads GGHL.

This sequence belongs to the phosphoglycerate kinase family. In terms of assembly, homodimer.

It is found in the cytoplasm. It catalyses the reaction (2R)-3-phosphoglycerate + ATP = (2R)-3-phospho-glyceroyl phosphate + ADP. It functions in the pathway carbohydrate degradation; glycolysis; pyruvate from D-glyceraldehyde 3-phosphate: step 2/5. This is Phosphoglycerate kinase (pgk) from Methanothermobacter thermautotrophicus (strain ATCC 29096 / DSM 1053 / JCM 10044 / NBRC 100330 / Delta H) (Methanobacterium thermoautotrophicum).